The following is a 171-amino-acid chain: UPF0312 protein MW2606 (171 aa).

This sequence belongs to the UPF0312 family.

In Staphylococcus aureus (strain MW2), this protein is UPF0312 protein MW2606.